Consider the following 111-residue polypeptide: Nucleoid-associated protein PFL_1905 (111 aa).

2 disordered regions span residues 1–20 (MKGGMAGLMKQAQQMQEKMA) and 88–111 (SNSQEKMSGMTAGMQLPPGMKLPF).

It belongs to the YbaB/EbfC family. As to quaternary structure, homodimer.

Its subcellular location is the cytoplasm. The protein resides in the nucleoid. In terms of biological role, binds to DNA and alters its conformation. May be involved in regulation of gene expression, nucleoid organization and DNA protection. The chain is Nucleoid-associated protein PFL_1905 from Pseudomonas fluorescens (strain ATCC BAA-477 / NRRL B-23932 / Pf-5).